A 225-amino-acid polypeptide reads, in one-letter code: RNA chaperone ProQ (225 aa).

Positions L103–V173 are disordered. Residues R109 to Q118 are compositionally biased toward low complexity. Positions R137–P146 are enriched in basic residues. Positions R147 to K156 are enriched in basic and acidic residues.

This sequence belongs to the ProQ family.

The protein resides in the cytoplasm. RNA chaperone with significant RNA binding, RNA strand exchange and RNA duplexing activities. May regulate ProP activity through an RNA-based, post-transcriptional mechanism. This is RNA chaperone ProQ from Klebsiella pneumoniae (strain 342).